A 241-amino-acid chain; its full sequence is 2,3,4,5-tetrahydropyridine-2,6-dicarboxylate N-acetyltransferase (241 aa).

The protein belongs to the transferase hexapeptide repeat family. DapH subfamily.

It catalyses the reaction (S)-2,3,4,5-tetrahydrodipicolinate + acetyl-CoA + H2O = L-2-acetamido-6-oxoheptanedioate + CoA. It participates in amino-acid biosynthesis; L-lysine biosynthesis via DAP pathway; LL-2,6-diaminopimelate from (S)-tetrahydrodipicolinate (acetylase route): step 1/3. Functionally, catalyzes the transfer of an acetyl group from acetyl-CoA to tetrahydrodipicolinate. This is 2,3,4,5-tetrahydropyridine-2,6-dicarboxylate N-acetyltransferase from Thermoanaerobacter pseudethanolicus (strain ATCC 33223 / 39E) (Clostridium thermohydrosulfuricum).